A 231-amino-acid polypeptide reads, in one-letter code: Enolase-phosphatase E1 (231 aa).

It belongs to the HAD-like hydrolase superfamily. MasA/MtnC family. As to quaternary structure, monomer. The cofactor is Mg(2+).

It carries out the reaction 5-methylsulfanyl-2,3-dioxopentyl phosphate + H2O = 1,2-dihydroxy-5-(methylsulfanyl)pent-1-en-3-one + phosphate. The protein operates within amino-acid biosynthesis; L-methionine biosynthesis via salvage pathway; L-methionine from S-methyl-5-thio-alpha-D-ribose 1-phosphate: step 3/6. It functions in the pathway amino-acid biosynthesis; L-methionine biosynthesis via salvage pathway; L-methionine from S-methyl-5-thio-alpha-D-ribose 1-phosphate: step 4/6. Bifunctional enzyme that catalyzes the enolization of 2,3-diketo-5-methylthiopentyl-1-phosphate (DK-MTP-1-P) into the intermediate 2-hydroxy-3-keto-5-methylthiopentenyl-1-phosphate (HK-MTPenyl-1-P), which is then dephosphorylated to form the acireductone 1,2-dihydroxy-3-keto-5-methylthiopentene (DHK-MTPene). The protein is Enolase-phosphatase E1 of Stenotrophomonas maltophilia (strain R551-3).